The following is a 457-amino-acid chain: Siroheme synthase (457 aa).

The interval 1-204 is precorrin-2 dehydrogenase /sirohydrochlorin ferrochelatase; that stretch reads MEIFPISLKL…DNLDIANQMM (204 aa). Residues 22–23 and 43–44 each bind NAD(+); these read HI and PD. Residue Ser-129 is modified to Phosphoserine. Residues 216–457 are uroporphyrinogen-III C-methyltransferase; sequence GEVYLVGAGP…VSLREQLQWL (242 aa). Position 225 (Pro-225) interacts with S-adenosyl-L-methionine. The Proton acceptor role is filled by Asp-248. The active-site Proton donor is the Lys-270. S-adenosyl-L-methionine contacts are provided by residues 301-303, Ile-306, 331-332, Met-383, and Gly-412; these read GGD and TA.

The protein in the N-terminal section; belongs to the precorrin-2 dehydrogenase / sirohydrochlorin ferrochelatase family. In the C-terminal section; belongs to the precorrin methyltransferase family.

The enzyme catalyses uroporphyrinogen III + 2 S-adenosyl-L-methionine = precorrin-2 + 2 S-adenosyl-L-homocysteine + H(+). It carries out the reaction precorrin-2 + NAD(+) = sirohydrochlorin + NADH + 2 H(+). The catalysed reaction is siroheme + 2 H(+) = sirohydrochlorin + Fe(2+). Its pathway is cofactor biosynthesis; adenosylcobalamin biosynthesis; precorrin-2 from uroporphyrinogen III: step 1/1. It functions in the pathway cofactor biosynthesis; adenosylcobalamin biosynthesis; sirohydrochlorin from precorrin-2: step 1/1. It participates in porphyrin-containing compound metabolism; siroheme biosynthesis; precorrin-2 from uroporphyrinogen III: step 1/1. The protein operates within porphyrin-containing compound metabolism; siroheme biosynthesis; siroheme from sirohydrochlorin: step 1/1. Its pathway is porphyrin-containing compound metabolism; siroheme biosynthesis; sirohydrochlorin from precorrin-2: step 1/1. Multifunctional enzyme that catalyzes the SAM-dependent methylations of uroporphyrinogen III at position C-2 and C-7 to form precorrin-2 via precorrin-1. Then it catalyzes the NAD-dependent ring dehydrogenation of precorrin-2 to yield sirohydrochlorin. Finally, it catalyzes the ferrochelation of sirohydrochlorin to yield siroheme. This Acinetobacter baylyi (strain ATCC 33305 / BD413 / ADP1) protein is Siroheme synthase.